Reading from the N-terminus, the 265-residue chain is Transcription factor BHLH062 (265 aa).

Residues 1-26 (MVPRDRVNAAAAGGGGEGRLVQSGIV) are disordered. The interval 35 to 48 (PKRIHKSEREKLKR) is basic motif; degenerate. One can recognise a bHLH domain in the interval 35 to 85 (PKRIHKSEREKLKRDKQNDLFNELGNLLEPDRQNNGKACVLGETTRILKDL). The helix-loop-helix motif stretch occupies residues 49–85 (DKQNDLFNELGNLLEPDRQNNGKACVLGETTRILKDL). Positions 75-130 (LGETTRILKDLLSQVESLRKENSSLKNESHYVALERNELHDDNSMLRTEILELQNE) form a coiled coil. The segment at 200–265 (ESATSEDSEP…TNEEDRIGRS (66 aa)) is disordered. Basic and acidic residues predominate over residues 210–220 (SQEHGISDHVT). Residues 245–256 (QDQQCSSGTSGT) are compositionally biased toward polar residues.

It belongs to the bHLH protein family. As to quaternary structure, interacts with TIFY11A/JAZ9.

The protein resides in the nucleus. In terms of biological role, transcription factor that plays a positive role in salt stress tolerance. Interacts with TIFY11A/JAZ9 and binds to the promoter of some potassium ion transporter genes to regulate potassium homeostasis during salt stress. This Oryza sativa subsp. japonica (Rice) protein is Transcription factor BHLH062.